The sequence spans 125 residues: Calcitonin gene-related peptide 1 (125 aa).

A signal peptide spans 1–25 (MVMLKISSFLAVYALVVCQMDSFQA). Positions 26 to 77 (APVRPGLESITDRVTLSDYEARRLLNALVKDFIQMTAEELEQASEGNSVTAQ) are excised as a propeptide. Cys-81 and Cys-86 are disulfide-bonded. Residue Phe-116 is modified to Phenylalanine amide. Residues 122–125 (SVQI) constitute a propeptide that is removed on maturation.

Belongs to the calcitonin family.

It localises to the secreted. Functionally, CGRP1/CALCA is a peptide hormone that induces vasodilation mediated by the CALCRL-RAMP1 receptor complex. Dilates a variety of vessels including the coronary, cerebral and systemic vasculature. Its abundance in the CNS also points toward a neurotransmitter or neuromodulator role. It also elevates platelet cAMP. CGRP1 can also bind and activate CALCR-RAMP1 (AMYR1) receptor complex. The protein is Calcitonin gene-related peptide 1 (CALCA) of Gallus gallus (Chicken).